The primary structure comprises 382 residues: Lipid-A-disaccharide synthase (382 aa).

It belongs to the LpxB family.

It catalyses the reaction 2-N,3-O-bis[(3R)-3-hydroxytetradecanoyl]-alpha-D-glucosaminyl 1-phosphate + UDP-2-N,3-O-bis[(3R)-3-hydroxytetradecanoyl]-alpha-D-glucosamine = lipid A disaccharide (E. coli) + UDP + H(+). The catalysed reaction is a lipid X + a UDP-2-N,3-O-bis[(3R)-3-hydroxyacyl]-alpha-D-glucosamine = a lipid A disaccharide + UDP + H(+). It functions in the pathway glycolipid biosynthesis; lipid IV(A) biosynthesis; lipid IV(A) from (3R)-3-hydroxytetradecanoyl-[acyl-carrier-protein] and UDP-N-acetyl-alpha-D-glucosamine: step 5/6. Its function is as follows. Condensation of UDP-2,3-diacylglucosamine and 2,3-diacylglucosamine-1-phosphate to form lipid A disaccharide, a precursor of lipid A, a phosphorylated glycolipid that anchors the lipopolysaccharide to the outer membrane of the cell. The polypeptide is Lipid-A-disaccharide synthase (Escherichia coli O157:H7).